The chain runs to 463 residues: MTNVITRFAPSPTGFLHIGSARTALFNYLFARHHNGKFLLRIEDTDKERSTNEAVEAIFSGLKWLGLDWDGEVIFQSKRNDLYKETALKLLQAGKAYYCFTSQEEIEKQRQKALENKQYFIFNSDWRDKDPAAYPTDIKPVIRLKTPREGSITIRDTLQGDVVIENSHIDDMVLLRSDGTATYMLAVVVDDHDMGITHIIRGDDHLTNAARQIAIYQACGYAVPSMTHIPLIHGADGAKLSKRHGALGVAAYKDMGYLPESVCNYLLRLGWSHGDDEIISMDQAIKWFNLDSLGKSPAKLDFANMNSLNAHYLRLLDNDSATSKTVERLRQNYNVSKQEVIYINQAIRSLLVRSETLLDLVQLAQIYLVDSPIIYKQDAKEIIENCDKDLIKQVIENLNKLKQFDKESVQNKFKEIATHNGLKLNELMKPVRALITGMTASPSVFEIAEILGKENILKRLKII.

The 'HIGH' region motif lies at 10–20; sequence PSPTGFLHIGS. The 'KMSKS' region signature appears at 239–243; sequence KLSKR. Lys242 contacts ATP.

It belongs to the class-I aminoacyl-tRNA synthetase family. Glutamate--tRNA ligase type 1 subfamily. In terms of assembly, monomer.

It is found in the cytoplasm. The enzyme catalyses tRNA(Glu) + L-glutamate + ATP = L-glutamyl-tRNA(Glu) + AMP + diphosphate. In terms of biological role, catalyzes the attachment of glutamate to tRNA(Glu) in a two-step reaction: glutamate is first activated by ATP to form Glu-AMP and then transferred to the acceptor end of tRNA(Glu). The chain is Glutamate--tRNA ligase 1 from Rickettsia canadensis (strain McKiel).